The sequence spans 508 residues: MLIVCRNSKSQDLDLYVKGVHFHLNKTLAKRSAKVTTLLESNKLHELRWIIRDMDINPSIFHLVTRFCYGYKIELSADNIVSVLCIAYYLEMSDDHSSNNLLNKAVTFLEQRVLMSWSETVKALCICSDKILDKLANVGLIEVFLDSLIEKALNDTRLLQDLITLPLRLYEPLILEVSKHNVSLENLVASVCNYANRWVFEKDSGDGSVSRNKREGIEAVERLLPHQRGTISSGFLFKSLKESIFLGACSDCRKGFEVRISNQLDMARAKDLQILSPTEDGSYDIELLKTILKSFYSNDSVPDLSRFVSVARMLEEFLLEAAASDAGLRVGTFKELAEIAVAASCDVLSYSDGIYRAIDVYLERHRDLIESEKMEACRFLHCKKLSPEACEHASKNEKLPLRIVMQVLFVSQMQIRDKVAREMKGVVERTENQVDEVESMSKKLLKLEIEPDYMKKRKIENLECVVHCEKKKTSVWREVKRKFGCMTSSTMDACSCHIKKRKTYHSYK.

The BTB domain maps to 11 to 77; it reads QDLDLYVKGV…CYGYKIELSA (67 aa). An NPH3 domain is found at 156–414; sequence TRLLQDLITL…MQVLFVSQMQ (259 aa). Y355 carries the phosphotyrosine modification.

It belongs to the NPH3 family.

It participates in protein modification; protein ubiquitination. May act as a substrate-specific adapter of an E3 ubiquitin-protein ligase complex (CUL3-RBX1-BTB) which mediates the ubiquitination and subsequent proteasomal degradation of target proteins. The polypeptide is BTB/POZ domain-containing protein At3g03510 (Arabidopsis thaliana (Mouse-ear cress)).